A 343-amino-acid chain; its full sequence is Multidrug resistance protein MdtN (343 aa).

Topologically, residues 1 to 12 are cytoplasmic; the sequence is MESTPKKAPRSK. The chain crosses the membrane as a helical; Signal-anchor for type II membrane protein span at residues 13–33; the sequence is FPALLVVALALVALVFVIWRV. The Periplasmic portion of the chain corresponds to 34–343; the sequence is DSAPSTNDAY…ASAVANLEPQ (310 aa).

Belongs to the membrane fusion protein (MFP) (TC 8.A.1) family. As to quaternary structure, could be part of a tripartite efflux system composed of MdtN, MdtO and MdtP.

It localises to the cell inner membrane. Could be involved in resistance to puromycin, acriflavine and tetraphenylarsonium chloride. This chain is Multidrug resistance protein MdtN (mdtN), found in Escherichia coli O157:H7.